Reading from the N-terminus, the 255-residue chain is tRNA-cytidine(32) 2-sulfurtransferase (255 aa).

The PP-loop motif signature appears at 37–42 (SGGKDS). Residues Cys112, Cys115, and Cys202 each contribute to the [4Fe-4S] cluster site.

It belongs to the TtcA family. In terms of assembly, homodimer. Mg(2+) serves as cofactor. Requires [4Fe-4S] cluster as cofactor.

It localises to the cytoplasm. The catalysed reaction is cytidine(32) in tRNA + S-sulfanyl-L-cysteinyl-[cysteine desulfurase] + AH2 + ATP = 2-thiocytidine(32) in tRNA + L-cysteinyl-[cysteine desulfurase] + A + AMP + diphosphate + H(+). The protein operates within tRNA modification. In terms of biological role, catalyzes the ATP-dependent 2-thiolation of cytidine in position 32 of tRNA, to form 2-thiocytidine (s(2)C32). The sulfur atoms are provided by the cysteine/cysteine desulfurase (IscS) system. This chain is tRNA-cytidine(32) 2-sulfurtransferase, found in Citrifermentans bemidjiense (strain ATCC BAA-1014 / DSM 16622 / JCM 12645 / Bem) (Geobacter bemidjiensis).